The sequence spans 218 residues: MGQKVNPCIFRTGPNLPRNWESVLYAKNNYSDFLLKILKIRKIINTEYSFAQITKILIEWPSSKNIVVNIYAKKIGVIIGKSGGDIEKLKQNIAKITSADVSINIREVKKPELEEAFIAQTIAQQLERRQSFKKVMKKAIHASMKQGAKGIKIICSGRLGGVEIARSESYKEGRVPLQTIRADIRYAFAEAITTYGVIGVKVWVYRCDVNQSRINEVK.

Positions 40-109 (IRKIINTEYS…DVSINIREVK (70 aa)) constitute a KH type-2 domain.

Belongs to the universal ribosomal protein uS3 family. In terms of assembly, part of the 30S ribosomal subunit. Forms a tight complex with proteins S10 and S14.

Functionally, binds the lower part of the 30S subunit head. Binds mRNA in the 70S ribosome, positioning it for translation. The protein is Small ribosomal subunit protein uS3 of Orientia tsutsugamushi (strain Boryong) (Rickettsia tsutsugamushi).